A 447-amino-acid chain; its full sequence is Acyl-CoA (8-3)-desaturase (447 aa).

M1 carries the N-acetylmethionine modification. Residues 1 to 124 (MAPDPVPTPG…FRELRATVER (124 aa)) are Cytoplasmic-facing. The Cytochrome b5 heme-binding domain occupies 19–97 (TRYFTWEEVA…MNSLLIGELA (79 aa)). The chain crosses the membrane as a helical span at residues 125-145 (MGLMKANHLFFLVYLLHILLL). The Lumenal portion of the chain corresponds to 146–160 (DVAAWLTLWIFGTSL). Residues 161 to 180 (VPFILCAVLLSTVQAQAGWL) traverse the membrane as a helical segment. Topologically, residues 181-268 (QHDFGHLSVF…HMPYNHQHKY (88 aa)) are cytoplasmic. A Histidine box-1 motif is present at residues 182-186 (HDFGH). Residues 219 to 223 (HFQHH) carry the Histidine box-2 motif. Residues 269-289 (FFLIGPPALLPLYFQWYIFYF) form a helical membrane-spanning segment. Over 290 to 308 (VVQRKKWVDLAWMLSFYAR) the chain is Lumenal. The helical transmembrane segment at 309–329 (IFFTYMPLLGLKGFLGLFFIV) threads the bilayer. Residues 330 to 447 (RFLESNWFVW…QLWLDAYLHQ (118 aa)) lie on the Cytoplasmic side of the membrane. The short motif at 385-389 (QIEHH) is the Histidine box-3 element.

This sequence belongs to the fatty acid desaturase type 1 family. In terms of tissue distribution, highly expressed in the adrenal gland, liver, brain, and testis, tissues where lipogenesis and steroidogenesis are active. Expressed in colonic mucosa.

The protein localises to the endoplasmic reticulum membrane. Its subcellular location is the mitochondrion. The enzyme catalyses (8Z,11Z,14Z)-eicosatrienoyl-CoA + 2 Fe(II)-[cytochrome b5] + O2 + 2 H(+) = (5Z,8Z,11Z,14Z)-eicosatetraenoyl-CoA + 2 Fe(III)-[cytochrome b5] + 2 H2O. The catalysed reaction is (8Z,11Z,14Z,17Z)-eicosatetraenoyl-CoA + 2 Fe(II)-[cytochrome b5] + O2 + 2 H(+) = (5Z,8Z,11Z,14Z,17Z)-eicosapentaenoyl-CoA + 2 Fe(III)-[cytochrome b5] + 2 H2O. It carries out the reaction (11E)-octadecenoyl-CoA + 2 Fe(II)-[cytochrome b5] + O2 + 2 H(+) = (5Z,11E)-octadecadienoyl-CoA + 2 Fe(III)-[cytochrome b5] + 2 H2O. It participates in lipid metabolism; polyunsaturated fatty acid biosynthesis. Acts as a front-end fatty acyl-coenzyme A (CoA) desaturase that introduces a cis double bond at carbon 5 located between a preexisting double bond and the carboxyl end of the fatty acyl chain. Involved in biosynthesis of highly unsaturated fatty acids (HUFA) from the essential polyunsaturated fatty acids (PUFA) linoleic acid (LA) (18:2n-6) and alpha-linolenic acid (ALA) (18:3n-3) precursors. Specifically, desaturates dihomo-gamma-linoleoate (DGLA) (20:3n-6) and eicosatetraenoate (ETA) (20:4n-3) to generate arachidonate (AA) (20:4n-6) and eicosapentaenoate (EPA) (20:5n-3), respectively. As a rate limiting enzyme for DGLA (20:3n-6) and AA (20:4n-6)-derived eicosanoid biosynthesis, controls the metabolism of inflammatory lipids like prostaglandin E2, critical for efficient acute inflammatory response and maintenance of epithelium homeostasis. Contributes to membrane phospholipid biosynthesis by providing AA (20:4n-6) as a major acyl chain esterified into phospholipids. In particular, regulates phosphatidylinositol-4,5-bisphosphate levels, modulating inflammatory cytokine production in T-cells. Also desaturates (11E)-octadecenoate (trans-vaccenoate)(18:1n-9), a metabolite in the biohydrogenation pathway of LA (18:2n-6). The protein is Acyl-CoA (8-3)-desaturase of Mus musculus (Mouse).